Here is a 143-residue protein sequence, read N- to C-terminus: Large ribosomal subunit protein uL15 (143 aa).

A disordered region spans residues 1–52; sequence MKLNTLAPAAGSKSAPKRLGRGIGSGLGKTSGKGHKGQKARSGGYHKVGFEG. Residues 21-31 are compositionally biased toward gly residues; sequence RGIGSGLGKTS.

This sequence belongs to the universal ribosomal protein uL15 family. As to quaternary structure, part of the 50S ribosomal subunit.

Binds to the 23S rRNA. The sequence is that of Large ribosomal subunit protein uL15 from Francisella tularensis subsp. holarctica (strain FTNF002-00 / FTA).